A 1128-amino-acid chain; its full sequence is Nck-associated protein 1 (1128 aa).

Position 2 is an N-acetylserine (serine 2). A disordered region spans residues 640 to 665; that stretch reads AVNKKSKKQTGKKGEPEREKPGVESM. A compositionally biased stretch (basic and acidic residues) spans 651–665; the sequence is KKGEPEREKPGVESM. Residues 995–1015 traverse the membrane as a helical segment; it reads IACLLMVFVAVSLPTLASNVM.

The protein belongs to the HEM-1/HEM-2 family. Component of the WAVE1 complex composed of ABI2, CYFIP1 or CYFIP2, BRK1, NCKAP1 and WASF1/WAVE1. Within the complex, a heterodimer containing NCKAP1 and CYFIP1 interacts with a heterotrimer formed by WAVE1, ABI2 and BRK1. Component of the WAVE2 complex composed of ABI1, CYFIP1/SRA1, NCKAP1/NAP1 and WASF2/WAVE2. CYFIP2 binds to activated RAC1 which causes the complex to dissociate, releasing activated WASF1. The complex can also be activated by NCK1. Associates preferentially with the first SH3 domain of NCK. Interacts with NYAP1, NYAP2 and MYO16. Interacts with TMEM132D. In terms of assembly, (Microbial infection) Interacts with human cytomegalovirus protein UL135. Expressed in all tissues examined except peripheral blood leukocytes, with highest expression in brain, heart, and skeletal muscle. Expressed in cells of various brain regions including Purkinje cells and dentate nucleus of the cerebellum, CA4 region and dentate gyrus of the hippocampus, and in frontal gray and white matter.

It localises to the cell membrane. Its subcellular location is the cell projection. The protein resides in the lamellipodium membrane. In terms of biological role, part of the WAVE complex that regulates lamellipodia formation. The WAVE complex regulates actin filament reorganization via its interaction with the Arp2/3 complex. Actin remodeling activity is regulated by RAC1. As component of the WAVE1 complex, required for BDNF-NTRK2 endocytic trafficking and signaling from early endosomes. This chain is Nck-associated protein 1 (NCKAP1), found in Homo sapiens (Human).